Here is a 182-residue protein sequence, read N- to C-terminus: Dual-action ribosomal maturation protein DarP (182 aa).

A disordered region spans residues 1–25; the sequence is MEENLADNSEREARPSKTKRKKEMH.

The protein belongs to the DarP family.

It is found in the cytoplasm. Functionally, member of a network of 50S ribosomal subunit biogenesis factors which assembles along the 30S-50S interface, preventing incorrect 23S rRNA structures from forming. Promotes peptidyl transferase center (PTC) maturation. This chain is Dual-action ribosomal maturation protein DarP, found in Nitrosospira multiformis (strain ATCC 25196 / NCIMB 11849 / C 71).